We begin with the raw amino-acid sequence, 209 residues long: Small ribosomal subunit protein uS4 (209 aa).

The segment at 23 to 46 is disordered; the sequence is SRNPLLKKPHPPGQHGMQRKKKSD. The S4 RNA-binding domain occupies 93-153; that stretch reads CRLDNMVYRM…EKSKRLQSVK (61 aa).

The protein belongs to the universal ribosomal protein uS4 family. In terms of assembly, part of the 30S ribosomal subunit. Contacts protein S5. The interaction surface between S4 and S5 is involved in control of translational fidelity.

In terms of biological role, one of the primary rRNA binding proteins, it binds directly to 16S rRNA where it nucleates assembly of the body of the 30S subunit. With S5 and S12 plays an important role in translational accuracy. In Chlamydia pneumoniae (Chlamydophila pneumoniae), this protein is Small ribosomal subunit protein uS4.